We begin with the raw amino-acid sequence, 748 residues long: MALPMLPGNSVNRNLGKDKFHKSQHFDYSNGVAMMVGTEKPGIGGDLLLGQSARAKYSRFPKGEGSGAPAWLAFDKQVLCFDAYFNEAVPQRREEKYRVRKCKIYFYLEDDTIQVVEPEFKNSGIPQGTLIRRHRIPLPAPKDDCFYNVHHFNINQEVLFYSRNFMITDCDPFTRNFLVKMGVRLNPPASTPADPYTTLRQELEENMKPLRPYERLDTLKQFLEHDRQVLRFYCYWDDSESMFGDPRELILHYFLADDTMEMYEVVPPNSGRDTVPKFLHRGKLPKHAPIPKRQPGEITDRTVLNVFGPVGQGGPYILDSLKTGALEEEFYKDSDLTIGAVINVWGRRVLICDCDYFTKEYYRSKYGIEDFPSISYKASPPPKPAKQVPPYTGFGSEEDSLCSCQGLLPKPPQKDFKKLMEKDRRGLVSNVLRFVGKMLTDSPVDKERVFIICFYLTDDTIAVFEPPQRNSGVIGGKFLERGRVKKPGQELFKSEMSEYFTAQDLYVGAHLLLNSQPFQLVDADDFTFSYMEQHADEFPKANIGTIISKVKSISEEQQKTVKQFFTMSDPSSTGSLPYESFRTLLADLDVELSEHEIMTLGRVYSVRQQPEVNVGLMLAVAQDHLKKKNFEKFSEMIQAFTHEDRDRCGQLSSKEARIICKAFRLPLSDDLLRALLEKFAGESEKIDYHAFLSGINWRENPVPAVLPEDTVKFDADWRGEAPEPAVKTINYSLLLEDVFGSATNINDS.

DM10 domains are found at residues 75–182 (DKQV…VKMG), 226–366 (DRQV…RSKY), and 428–535 (VSNV…EQHA). 2 EF-hand domains span residues 556–591 (EQQK…LDVE) and 631–666 (EKFS…FRLP).

It localises to the cytoplasm. The protein localises to the cytoskeleton. Its subcellular location is the cilium axoneme. Microtubule inner protein (MIP) part of the dynein-decorated doublet microtubules (DMTs) in cilia axoneme, which is required for motile cilia beating. The chain is EF-hand domain-containing family member C2 (efhc2) from Danio rerio (Zebrafish).